Reading from the N-terminus, the 347-residue chain is N-acetyl-gamma-glutamyl-phosphate reductase (347 aa).

The active site involves Cys151.

This sequence belongs to the NAGSA dehydrogenase family. Type 1 subfamily.

It is found in the cytoplasm. It catalyses the reaction N-acetyl-L-glutamate 5-semialdehyde + phosphate + NADP(+) = N-acetyl-L-glutamyl 5-phosphate + NADPH + H(+). It functions in the pathway amino-acid biosynthesis; L-arginine biosynthesis; N(2)-acetyl-L-ornithine from L-glutamate: step 3/4. Catalyzes the NADPH-dependent reduction of N-acetyl-5-glutamyl phosphate to yield N-acetyl-L-glutamate 5-semialdehyde. This Corynebacterium diphtheriae (strain ATCC 700971 / NCTC 13129 / Biotype gravis) protein is N-acetyl-gamma-glutamyl-phosphate reductase.